A 205-amino-acid chain; its full sequence is Riboflavin kinase (205 aa).

Residues 1–24 are disordered; the sequence is MRPDTSRDPVAGPDSGPEPPFPIR. Positions 44 and 46 each coordinate Mg(2+). The active-site Nucleophile is glutamate 104.

It belongs to the flavokinase family. Zn(2+) serves as cofactor. The cofactor is Mg(2+).

The catalysed reaction is riboflavin + ATP = FMN + ADP + H(+). The protein operates within cofactor biosynthesis; FMN biosynthesis; FMN from riboflavin (ATP route): step 1/1. In terms of biological role, catalyzes the phosphorylation of riboflavin (vitamin B2) to form flavin mononucleotide (FMN) coenzyme. The chain is Riboflavin kinase (fmn1) from Aspergillus terreus (strain NIH 2624 / FGSC A1156).